Consider the following 311-residue polypeptide: Cell division protein ZipA (311 aa).

Residues Met-1–Arg-5 are Periplasmic-facing. The helical transmembrane segment at Phe-6 to Thr-26 threads the bilayer. Residues Ser-27 to Ala-311 are Cytoplasmic-facing. Over residues Lys-32–Glu-54 the composition is skewed to basic and acidic residues. The segment at Lys-32–Glu-60 is disordered.

Belongs to the ZipA family. Interacts with FtsZ via their C-terminal domains.

The protein resides in the cell inner membrane. Its function is as follows. Essential cell division protein that stabilizes the FtsZ protofilaments by cross-linking them and that serves as a cytoplasmic membrane anchor for the Z ring. Also required for the recruitment to the septal ring of downstream cell division proteins. This chain is Cell division protein ZipA, found in Vibrio vulnificus (strain YJ016).